The primary structure comprises 324 residues: Ribose-phosphate pyrophosphokinase (324 aa).

ATP contacts are provided by residues 45-47 (NGE) and 104-105 (RQ). Residues His-138 and Asp-178 each contribute to the Mg(2+) site. Lys-201 is an active-site residue. Residues Arg-203, Asp-229, and 233 to 237 (DTGGT) contribute to the D-ribose 5-phosphate site.

The protein belongs to the ribose-phosphate pyrophosphokinase family. Class I subfamily. As to quaternary structure, homohexamer. Mg(2+) is required as a cofactor.

It is found in the cytoplasm. The enzyme catalyses D-ribose 5-phosphate + ATP = 5-phospho-alpha-D-ribose 1-diphosphate + AMP + H(+). The protein operates within metabolic intermediate biosynthesis; 5-phospho-alpha-D-ribose 1-diphosphate biosynthesis; 5-phospho-alpha-D-ribose 1-diphosphate from D-ribose 5-phosphate (route I): step 1/1. Functionally, involved in the biosynthesis of the central metabolite phospho-alpha-D-ribosyl-1-pyrophosphate (PRPP) via the transfer of pyrophosphoryl group from ATP to 1-hydroxyl of ribose-5-phosphate (Rib-5-P). In Streptomyces avermitilis (strain ATCC 31267 / DSM 46492 / JCM 5070 / NBRC 14893 / NCIMB 12804 / NRRL 8165 / MA-4680), this protein is Ribose-phosphate pyrophosphokinase.